A 308-amino-acid chain; its full sequence is GDP-L-colitose synthase (308 aa).

NADP(+) contacts are provided by residues 7–13 (GAGGMVG) and 101–104 (LGSS). The active-site Proton donor/acceptor is the Tyr-132. Residues Lys-136, 160 to 163 (PCNL), and His-176 contribute to the NADP(+) site. Positions 184, 199, and 206 each coordinate substrate.

The protein belongs to the NAD(P)-dependent epimerase/dehydratase family. Fucose synthase subfamily. In terms of assembly, homodimer.

The catalysed reaction is GDP-beta-L-colitose + NAD(+) = GDP-4-dehydro-3,6-dideoxy-alpha-D-mannose + NADH + H(+). It carries out the reaction GDP-beta-L-colitose + NADP(+) = GDP-4-dehydro-3,6-dideoxy-alpha-D-mannose + NADPH + H(+). The protein operates within nucleotide-sugar metabolism; GDP-L-colitose biosynthesis. Involved in the biosynthesis of the L-colitose (3,6-dideoxyl-L-xylo-hexose) present in the O-antigen region of lipopolysaccharides (LPS) where it serves as antigenic determinant and are vital for bacterial defense and survival. Catalyzes the two-step NADP-dependent conversion of GDP-4-keto-3,6-dideoxy-D-mannose to GDP-L-colitose. ColC is a bifunctional enzyme catalyzing the C-5 epimerization of GDP-4-keto-3,6-dideoxy-D-mannose and the subsequent C-4 keto reduction of the resulting L-epimer to give GDP-L-colitose. It can use both NADP(+) and NAD(+) as electron acceptor, with a slight preference for NADP(+). The polypeptide is GDP-L-colitose synthase (Yersinia pseudotuberculosis).